The following is a 192-amino-acid chain: LexA repressor (192 aa).

The H-T-H motif DNA-binding region spans 15 to 35; that stretch reads RAEIARELGFRSANAAEEHLK. Active-site for autocatalytic cleavage activity residues include Ser-109 and Lys-146.

The protein belongs to the peptidase S24 family. As to quaternary structure, homodimer.

The catalysed reaction is Hydrolysis of Ala-|-Gly bond in repressor LexA.. Its function is as follows. Represses a number of genes involved in the response to DNA damage (SOS response), including recA and lexA. In the presence of single-stranded DNA, RecA interacts with LexA causing an autocatalytic cleavage which disrupts the DNA-binding part of LexA, leading to derepression of the SOS regulon and eventually DNA repair. The polypeptide is LexA repressor (Photobacterium profundum (strain SS9)).